The sequence spans 1082 residues: Sodium/potassium exporting P-type ATPase 2 (1082 aa).

At 1-75 (MSSINTNVAE…GANTLGDGDK (75 aa)) the chain is on the cytoplasmic side. Residues 76-96 (ISLTKIIAHQVCNAMILVLII) form a helical membrane-spanning segment. Residues 97–98 (SM) are Extracellular-facing. The chain crosses the membrane as a helical span at residues 99-119 (VIALAIKDWISGGVIGFVVLI). The Cytoplasmic portion of the chain corresponds to 120–308 (NISVGFVQEY…VGTPLQRKLS (189 aa)). A helical transmembrane segment spans residues 309–329 (WLAIFLFWGCRYFCNYCNGIP). The Extracellular portion of the chain corresponds to 330–336 (KNRVNKE). Residues 337 to 357 (VAIYAICVALSMIPSALIVVL) form a helical membrane-spanning segment. Over 358 to 807 (TITMAVGAQV…RMSSNIQKFV (450 aa)) the chain is Cytoplasmic. D393 (4-aspartylphosphate intermediate) is an active-site residue. Positions 393 and 395 each coordinate Mg(2+). T395, E499, K552, R604, T664, G665, D666, R723, and K729 together coordinate ATP. D748 is a binding site for Mg(2+). An ATP-binding site is contributed by N751. A helical transmembrane segment spans residues 808 to 828 (LQLLAENVAQALYLMVGLAFI). Topologically, residues 829-832 (DDSG) are extracellular. Residues 833 to 853 (LSVFPLSPVEVLWILVVTSCF) form a helical membrane-spanning segment. At 854 to 884 (PAMDLGQERASDDILEESPNSTIFTWEVIID) the chain is on the cytoplasmic side. The helical transmembrane segment at 885 to 905 (MIVYGFWMAVCCLVCFVIIVY) threads the bilayer. The Extracellular segment spans residues 906-935 (GEGDPYLGVNCNKSSSSNSDVCELVFRGRS). Residues 936 to 956 (ASFATMTWCALILAWECIHPY) traverse the membrane as a helical segment. Topologically, residues 957–983 (NSLFYMRQDTDHPWWKQTVIDLWDNQF) are cytoplasmic. A helical membrane pass occupies residues 984-1004 (LFWSVAIGFISVFPVVYIPVI). Residues 1005-1007 (NTK) lie on the Extracellular side of the membrane. A helical transmembrane segment spans residues 1008–1028 (VFLHGPIGYEWGLAVGFSILF). At 1029 to 1082 (LAGSELWKWIKRIHKRKANKKAKNPEYELERSDPFKKYASFSRSNTMDRPELMV) the chain is on the cytoplasmic side.

It belongs to the cation transport ATPase (P-type) (TC 3.A.3) family. Type IID subfamily. Requires Mg(2+) as cofactor. The active site is phosphorylated in presence of sodium or potassium and in conditions of higher pH. Not phosphorylated in presence of calcium ions.

It is found in the cell membrane. The catalysed reaction is Na(+)(in) + ATP + H2O = Na(+)(out) + ADP + phosphate + H(+). It carries out the reaction K(+)(in) + ATP + H2O = K(+)(out) + ADP + phosphate + H(+). Catalyzes the hydrolysis of ATP coupled with the export of sodium and potassium from the cell. May be an inefficient sodium exporter. May transport other cations such as lithium. Sodium/potassium efflux ATPases are involved in salt tolerance and maintaining the membrane potential across the plasma membrane in high salinity (Na+) or alkaline (K+) environments. In Schwanniomyces occidentalis (Yeast), this protein is Sodium/potassium exporting P-type ATPase 2.